A 273-amino-acid chain; its full sequence is 2,3,4,5-tetrahydropyridine-2,6-dicarboxylate N-succinyltransferase (273 aa).

Substrate-binding residues include Arg-104 and Asp-141.

This sequence belongs to the transferase hexapeptide repeat family. Homotrimer.

The protein localises to the cytoplasm. The catalysed reaction is (S)-2,3,4,5-tetrahydrodipicolinate + succinyl-CoA + H2O = (S)-2-succinylamino-6-oxoheptanedioate + CoA. Its pathway is amino-acid biosynthesis; L-lysine biosynthesis via DAP pathway; LL-2,6-diaminopimelate from (S)-tetrahydrodipicolinate (succinylase route): step 1/3. The polypeptide is 2,3,4,5-tetrahydropyridine-2,6-dicarboxylate N-succinyltransferase (Azoarcus sp. (strain BH72)).